Consider the following 762-residue polypeptide: LON peptidase N-terminal domain and RING finger protein 1 (762 aa).

The interval 1–35 is disordered; it reads MSSPAVARASPGGNREASGGPRSRNGPWEVGGGGE. One copy of the TPR 1 repeat lies at 47–80; that stretch reads WELLLRRGELLALGGHLKGALEAFAAALRRGAPA. The RING-type 1 zinc finger occupies 118–154; the sequence is CLSCRGFLSEPVTVPCGHSYCRRCLRRELRARCRLCR. TPR repeat units lie at residues 201–233, 235–267, and 268–301; these read ARAA…EPSD, TLKI…LPNW, and PEVY…DEDF. Position 420 is a phosphoserine (Ser-420). The RING-type 2 zinc finger occupies 468–506; the sequence is CSLCMRLFFEPVTTPCGHSFCKNCLERCLDHAPYCPLCK. Residues 547–757 form the Lon N-terminal domain; sequence TAELSHLTKN…KIQHILTYFS (211 aa).

The polypeptide is LON peptidase N-terminal domain and RING finger protein 1 (Lonrf1) (Mus musculus (Mouse)).